A 138-amino-acid chain; its full sequence is ATP synthase epsilon chain, chloroplastic (138 aa).

It belongs to the ATPase epsilon chain family. In terms of assembly, F-type ATPases have 2 components, CF(1) - the catalytic core - and CF(0) - the membrane proton channel. CF(1) has five subunits: alpha(3), beta(3), gamma(1), delta(1), epsilon(1). CF(0) has three main subunits: a, b and c.

The protein localises to the plastid. It localises to the chloroplast thylakoid membrane. Its function is as follows. Produces ATP from ADP in the presence of a proton gradient across the membrane. In Galdieria sulphuraria (Red alga), this protein is ATP synthase epsilon chain, chloroplastic.